Consider the following 368-residue polypeptide: MALVTNVCEYEELAKHKLPKMVYDFYAVDAEDQWTLRENSEAFSRILFQPVVLVDVSCIDMSMSVLGYNISMPIMIAPTALHKLAHPEGELATARAAAAAETIMTLSSWSSCSIEEVNLAGPGVRFFQLSIYKDRNLVQQLIQRAEKAGYKAIVLTVDAPWLGRREADVKNRFTLPQNVMLKIFEGLDQGKIDETNGSGLAAYVASQIDRSFSWKDIKWLQTVTSLPVLVKGIITAQDTRIAIEYGAAGIIMSNHGGRQLDYLPATISCLEEVVREANGRVPVFIDSGFRRGTDVFKALALGASGVFIGRPVLFSLAIDGEAGVRNALRMLRDELEITMALSGCTSVKEITRGHVVTESDRIRRCSRL.

The 360-residue stretch at 1–360 (MALVTNVCEY…TRGHVVTESD (360 aa)) folds into the FMN hydroxy acid dehydrogenase domain. FMN-binding positions include 78-80 (PTA), Ser-107, 128-130 (QLS), and Thr-156. Glyoxylate is bound at residue Arg-165. FMN contacts are provided by Lys-231 and Ser-253. The glyoxylate site is built by His-255 and Arg-258. Residue His-255 is the Proton acceptor of the active site. FMN is bound by residues 286–290 (DSGFR) and 309–310 (GR). Residues 366-368 (SRL) carry the Microbody targeting signal motif.

The protein belongs to the FMN-dependent alpha-hydroxy acid dehydrogenase family. In terms of assembly, homotetramer. It depends on FMN as a cofactor.

It is found in the peroxisome. It carries out the reaction glycolate + O2 = glyoxylate + H2O2. It functions in the pathway photosynthesis; photorespiration; glycine from 2-phosphoglycolate: step 2/3. Functionally, catalyzes the oxidation of glycolate to glyoxylate, with a reduction of O2 to H2O2. Is a key enzyme in photorespiration in green plants. The polypeptide is Glycolate oxidase 2 (GLO2) (Oryza sativa subsp. indica (Rice)).